The chain runs to 72 residues: Translation initiation factor IF-1 (72 aa).

The region spanning 1-72 (MAKEDCIEME…TKGRIKFRSK (72 aa)) is the S1-like domain.

Belongs to the IF-1 family. Component of the 30S ribosomal translation pre-initiation complex which assembles on the 30S ribosome in the order IF-2 and IF-3, IF-1 and N-formylmethionyl-tRNA(fMet); mRNA recruitment can occur at any time during PIC assembly.

It is found in the cytoplasm. Functionally, one of the essential components for the initiation of protein synthesis. Stabilizes the binding of IF-2 and IF-3 on the 30S subunit to which N-formylmethionyl-tRNA(fMet) subsequently binds. Helps modulate mRNA selection, yielding the 30S pre-initiation complex (PIC). Upon addition of the 50S ribosomal subunit IF-1, IF-2 and IF-3 are released leaving the mature 70S translation initiation complex. The polypeptide is Translation initiation factor IF-1 (Francisella tularensis subsp. tularensis (strain FSC 198)).